Consider the following 298-residue polypeptide: Rhodopsin (298 aa).

At 1–15 (IHLHWYEYPPMNPMM) the chain is on the extracellular side. A helical transmembrane segment spans residues 16–40 (YPLLLIFMLFTGILCLAGNFVTIWV). The Cytoplasmic portion of the chain corresponds to 41-52 (FMNTKSLRTPAN). The chain crosses the membrane as a helical span at residues 53-75 (LLVVNLAMSDFLMMFTMFPPMMV). Over 76-89 (TCYYHTWTLGPTFC) the chain is Extracellular. Residues Cys89 and Cys166 are joined by a disulfide bond. A helical membrane pass occupies residues 90–112 (QVYAFLGNLCGCASIWTMVFITF). The short motif at 113 to 115 (DRY) is the 'Ionic lock' involved in activated form stabilization element. Residues 113-131 (DRYNVIVKGVAGEPLSTKK) lie on the Cytoplasmic side of the membrane. A helical membrane pass occupies residues 132–152 (ASLWILTIWVLSTTWCMAPFF). The Extracellular portion of the chain corresponds to 153–179 (GWNHYVPEGNLTGCGTDYLSEDILSRS). Asn162 carries an N-linked (GlcNAc...) asparagine glycan. Residues 180-201 (YLYVYSTWVYFLPLAITIYCYV) traverse the membrane as a helical segment. The Cytoplasmic segment spans residues 202-242 (FIIKAVAAHEKGMRDQAKKMGIKSLRNEEAQKTSAECRLAK). A helical transmembrane segment spans residues 243-264 (IAMTTVALWFIAWTPYLLINWV). The Extracellular segment spans residues 265–275 (GMFARSYLSPV). A helical transmembrane segment spans residues 276-297 (YTIWGYVFAKANAVYNPIVYAI). Lys285 is modified (N6-(retinylidene)lysine).

Belongs to the G-protein coupled receptor 1 family. Opsin subfamily. In terms of assembly, homodimer. Interacts with GNAQ. Post-translationally, contains one covalently linked retinal chromophore.

The protein resides in the cell projection. The protein localises to the rhabdomere membrane. In terms of biological role, photoreceptor required for image-forming vision at low light intensity. Can use both retinal and 3-dehydroretinal as visual pigment. Light-induced isomerization of 11-cis to all-trans retinal triggers a conformational change that activates signaling via G-proteins. Signaling via GNAQ probably mediates the activation of phospholipase C. The chain is Rhodopsin (RHO) from Procambarus orcinus (Crayfish).